A 95-amino-acid polypeptide reads, in one-letter code: Putative defensin-like protein 262 (95 aa).

The first 26 residues, M1–A26, serve as a signal peptide directing secretion. 4 disulfides stabilise this stretch: C48/C95, C64/C83, C70/C91, and C74/C93.

It belongs to the DEFL family.

The protein localises to the secreted. The chain is Putative defensin-like protein 262 from Arabidopsis thaliana (Mouse-ear cress).